Consider the following 663-residue polypeptide: Fructose-1,6-bisphosphatase class 3 1 (663 aa).

This sequence belongs to the FBPase class 3 family. Mn(2+) is required as a cofactor.

The enzyme catalyses beta-D-fructose 1,6-bisphosphate + H2O = beta-D-fructose 6-phosphate + phosphate. Its pathway is carbohydrate biosynthesis; gluconeogenesis. The protein is Fructose-1,6-bisphosphatase class 3 1 of Clostridium beijerinckii (strain ATCC 51743 / NCIMB 8052) (Clostridium acetobutylicum).